The chain runs to 294 residues: Protein PET54 (294 aa).

It localises to the mitochondrion inner membrane. Functionally, activator of specific mitochondrial mRNAs. PET54 is involved in the excision of intron aI5-beta from pre-mRNA for cytochrome c oxidase I (COX1) and plays a role in promoting the translation of COX3. The protein is Protein PET54 (PET54) of Saccharomyces bayanus (Yeast).